A 156-amino-acid polypeptide reads, in one-letter code: Large ribosomal subunit protein uL15 (156 aa).

Positions Met-1–Thr-13 are enriched in basic and acidic residues. Residues Met-1 to Arg-41 form a disordered region. Residues Arg-21–Val-35 show a composition bias toward gly residues.

It belongs to the universal ribosomal protein uL15 family. In terms of assembly, part of the 50S ribosomal subunit.

Functionally, binds to the 23S rRNA. This chain is Large ribosomal subunit protein uL15, found in Sinorhizobium medicae (strain WSM419) (Ensifer medicae).